A 629-amino-acid polypeptide reads, in one-letter code: MAPPGSRTVLLLALTIIARTQALKPTHYLTKHDVERLKASLDRPFTSLESAFYSIVGLSSLGAQVPDEKKACTFIKSNLDPSNVDSLFYPPQSSQALSGCEISISNETKDLLLAAVSEDSSVTQIYHAVAALSGFGLPLASQEALGALTARLSKEETVLATVQALQTASYLSQQADLRSIVEEIEDLVARLDELGGVYLQFEEGLLETTALFVAATYKLMDHEGTEPSIKEDQVIQLMNTIFSKKNFESLPEAFSVASAAAALSQNRYHVPVVVVPEGSPSDTQEQAFLRLQVTNVLSQPLTQATVKLEHAKSVASRATVLQKTSFTPVGDVFELNFVNVKFSSGYYDFSVKVEGDNRYIANTVELRVKISTEVGITNVDLSTVDKDQSIAPKTTRVTYPAKAKGPFIADSPQNFALFFQLVDVNTGAELTPHQTFVRLHNQKTGQEVVFVAEPDSKNVYRFELDTSERKIEFDSASGTYTLYLIIGDATLKNPIHWNVADVVIRFPEEDAPSTVLSKNLFTAKQEIQHLFRDPEKRPPTVVSNTFTGLILSPLLLLFALWIRIGAKISNFTFGLTIIFHLGHAMLAMYVYWTQLNMFQTLKYLAILGSVTFLAGNRMLAQQAIKRTAH.

An N-terminal signal peptide occupies residues 1–22; it reads MAPPGSRTVLLLALTIIARTQA. Over 23 to 541 the chain is Lumenal; the sequence is LKPTHYLTKH…RDPEKRPPTV (519 aa). N-linked (GlcNAc...) asparagine glycosylation is present at asparagine 106. A Glycyl lysine isopeptide (Lys-Gly) (interchain with G-Cter in ubiquitin) cross-link involves residue lysine 154. The helical transmembrane segment at 542-562 threads the bilayer; it reads VSNTFTGLILSPLLLLFALWI. The Cytoplasmic segment spans residues 563 to 570; sequence RIGAKISN. The helical transmembrane segment at 571–591 threads the bilayer; sequence FTFGLTIIFHLGHAMLAMYVY. The Lumenal segment spans residues 592-594; it reads WTQ. Residues 595–615 form a helical membrane-spanning segment; the sequence is LNMFQTLKYLAILGSVTFLAG. Residues 616–629 are Cytoplasmic-facing; it reads NRMLAQQAIKRTAH.

The protein belongs to the SWP1 family. As to quaternary structure, component of the oligosaccharyltransferase (OST) complex. OST exists in two different complex forms which contain common core subunits RPN1, RPN2, OST48, OST4, DAD1 and TMEM258, either STT3A or STT3B as catalytic subunits, and form-specific accessory subunits. STT3A complex assembly occurs through the formation of 3 subcomplexes. Subcomplex 1 contains RPN1 and TMEM258, subcomplex 2 contains the STT3A-specific subunits STT3A, DC2/OSTC, and KCP2 as well as the core subunit OST4, and subcomplex 3 contains RPN2, DAD1, and OST48. The STT3A complex can form stable complexes with the Sec61 complex or with both the Sec61 and TRAP complexes. Interacts with DDI2. Interacts with TMEM35A/NACHO.

The protein resides in the endoplasmic reticulum. Its subcellular location is the endoplasmic reticulum membrane. It functions in the pathway protein modification; protein glycosylation. In terms of biological role, subunit of the oligosaccharyl transferase (OST) complex that catalyzes the initial transfer of a defined glycan (Glc(3)Man(9)GlcNAc(2) in eukaryotes) from the lipid carrier dolichol-pyrophosphate to an asparagine residue within an Asn-X-Ser/Thr consensus motif in nascent polypeptide chains, the first step in protein N-glycosylation. N-glycosylation occurs cotranslationally and the complex associates with the Sec61 complex at the channel-forming translocon complex that mediates protein translocation across the endoplasmic reticulum (ER). All subunits are required for a maximal enzyme activity. The chain is Dolichyl-diphosphooligosaccharide--protein glycosyltransferase subunit 2 from Sus scrofa (Pig).